We begin with the raw amino-acid sequence, 270 residues long: uncharacterized protein (270 aa).

Residues 1–37 are Cytoplasmic-facing; sequence MATHTSKRRIHRWENNELSEENSTIIYFPARGLMWTH. A helical transmembrane segment spans residues 38 to 58; the sequence is FPFVLGICLEFVGYVLKIVFI. Topologically, residues 59 to 65 are extracellular; sequence NSPSIST. Residues 66-86 form a helical membrane-spanning segment; the sequence is FIAQSVLLLIAPSLYALSIFM. Residues 87–93 are Cytoplasmic-facing; it reads LFSKMAR. Residues 94-114 traverse the membrane as a helical segment; it reads LILMEAYMLIPAKFSTVSFVV. At 115 to 140 the chain is on the extracellular side; that stretch reads ADMIGRVLQAVGGGLLSSWNSRNTGR. A helical membrane pass occupies residues 141 to 161; that stretch reads ILIIVGLFIQIFCYTFLTFSQ. The Cytoplasmic portion of the chain corresponds to 162 to 181; sequence LFLHYKMKATPSKIVRDSNE. The chain crosses the membrane as a helical span at residues 182-202; it reads WFQYNFILLAGILLVNGRTIV. Residues 203–220 lie on the Extracellular side of the membrane; the sequence is RVVQFLMGLQSYIGQHEW. Residues 221–241 form a helical membrane-spanning segment; it reads CLYVFDTVLMFLLPLIFLATF. Residues 242–270 lie on the Cytoplasmic side of the membrane; it reads RARNLFKLQDKSVNIQLNKLLDKESVSED.

It belongs to the lipid-translocating exporter (LTE) (TC 9.A.26.1) family.

The protein localises to the membrane. This is an uncharacterized protein from Saccharomyces cerevisiae (strain ATCC 204508 / S288c) (Baker's yeast).